A 167-amino-acid chain; its full sequence is Small ribosomal subunit protein uS5 (167 aa).

In terms of domain architecture, S5 DRBM spans 11-74 (LQEKLIAVNR…EKARRNMINV (64 aa)).

Belongs to the universal ribosomal protein uS5 family. Part of the 30S ribosomal subunit. Contacts proteins S4 and S8.

Its function is as follows. With S4 and S12 plays an important role in translational accuracy. Functionally, located at the back of the 30S subunit body where it stabilizes the conformation of the head with respect to the body. The sequence is that of Small ribosomal subunit protein uS5 from Shigella dysenteriae serotype 1 (strain Sd197).